We begin with the raw amino-acid sequence, 1894 residues long: 1,3-beta-glucan synthase component bgs2 (1894 aa).

Disordered stretches follow at residues 1 to 53 and 282 to 310; these read MSWH…DSNK and GPKIKQAKKKQKRKSNKAETEGTNEPETS. Polar residues predominate over residues 32-51; it reads EFNNPGEESTYPQANSWNDS. Positions 286–296 are enriched in basic residues; it reads KQAKKKQKRKS. 16 helical membrane-spanning segments follow: residues 530–550, 566–586, 600–620, 655–675, 710–730, 731–751, 1338–1358, 1394–1414, 1476–1498, 1503–1525, 1598–1618, 1637–1657, 1673–1693, 1697–1717, 1778–1798, and 1837–1857; these read VSLGGAVATLLMLLATIFEWI, FLILILFFILNVAPTVFVFGF, VAIVHFIFSVFTFIYFSLVPL, VSWGLWLLVFGAKFTESYFFL, ILLGIMYVTDLVLFFLDTYLW, YILVNTVFSVARSFFLGISIW, IFIMLSVQLFMVVLVNLGGMY, CIISIFIVFFISFVPLTVQEL, LLFSRFAGPSIYLGSRTLLMLLF, VWIPHLIYFWISTLAMCISPFIF, FTEIFIPLMLVPLTLVSYFFI, ILILAFLPIIVAAVVSMTFAG, FGAVLAALAHGITVFMFIIVF, WYLEAWCLAKTVLSMLCIIAI, DFFLCHLLLFLMLPVLLIPFI, and TMFFLLLIAFLALIIIPLVVA.

The protein belongs to the glycosyltransferase 48 family. In terms of assembly, component of the 1,3-beta-glucan synthase (GS) complex, composed of at least the alternate catalytic subunits bgs1, bgs2, bgs3, and bgs4, and a regulatory subunit chr4.

It is found in the prospore membrane. It carries out the reaction [(1-&gt;3)-beta-D-glucosyl](n) + UDP-alpha-D-glucose = [(1-&gt;3)-beta-D-glucosyl](n+1) + UDP + H(+). In terms of biological role, alternate catalytic subunit of the 1,3-beta-glucan synthase (GS) complex. Synthesizes 1,3-beta-glucan, a major structural component of the yeast cell wall. Has a role in ascospore development where it is required for the assembly of a functional spore wall. The protein is 1,3-beta-glucan synthase component bgs2 of Schizosaccharomyces pombe (strain 972 / ATCC 24843) (Fission yeast).